Here is a 1211-residue protein sequence, read N- to C-terminus: RNA helicase Mov10l1 (1211 aa).

2 disordered regions span residues 340 to 385 (KENS…GENG) and 674 to 710 (WNHA…RVGD). 2 stretches are compositionally biased toward polar residues: residues 345-372 (DENI…NNRG) and 674-688 (WNHA…QSTS). Over residues 694-710 (TMTDQAEHGTEERRVGD) the composition is skewed to basic and acidic residues. 770–777 (GPPGTGKT) lines the ATP pocket. The DEAG box motif lies at 886–889 (DEAG). The segment at 1192–1211 (DPSYPVVPESTGPEKHQEPS) is disordered.

This sequence belongs to the DNA2/NAM7 helicase family. SDE3 subfamily. Interacts with PIWIL1. Interacts with PIWIL2. Interacts with PIWIL4. Interacts with HSPA2. Interacts with PLD6. As to expression, specifically expressed in testis.

It localises to the cytoplasm. It carries out the reaction ATP + H2O = ADP + phosphate + H(+). ATP-dependent RNA helicase required during spermatogenesis to repress transposable elements and prevent their mobilization, which is essential for germline integrity. Acts via the piRNA metabolic process, which mediates the repression of transposable elements during meiosis by forming complexes composed of piRNAs and Piwi proteins and governs the methylation and subsequent repression of transposons. Involved in the primary piRNA metabolic process. Specifically binds to piRNA precursors and promotes the generation of intermediate piRNA processing fragments that are subsequently loaded to Piwi proteins. Acts via its ATP-dependent RNA helicase activity: displays 5'-3' RNA unwinding activity and probably mediates unwinding and funneling of single-stranded piRNA precursor transcripts to the endonuclease that catalyzes the first cleavage step of piRNA processing to generate piRNA intermediate fragments that are subsequently loaded to Piwi proteins. The sequence is that of RNA helicase Mov10l1 from Homo sapiens (Human).